The primary structure comprises 358 residues: Glutamate 5-kinase (358 aa).

ATP is bound at residue Lys-9. Substrate contacts are provided by Ser-49, Asp-136, and Asn-148. ATP-binding positions include 168 to 169 (TD) and 210 to 216 (TGGMTTK). Residues 275–353 (DAAVEVDAGA…RAEGVLIHRN (79 aa)) enclose the PUA domain.

This sequence belongs to the glutamate 5-kinase family.

It is found in the cytoplasm. It catalyses the reaction L-glutamate + ATP = L-glutamyl 5-phosphate + ADP. The protein operates within amino-acid biosynthesis; L-proline biosynthesis; L-glutamate 5-semialdehyde from L-glutamate: step 1/2. Functionally, catalyzes the transfer of a phosphate group to glutamate to form L-glutamate 5-phosphate. This is Glutamate 5-kinase from Streptococcus suis (strain 05ZYH33).